The primary structure comprises 152 residues: Arginine repressor (152 aa).

It belongs to the ArgR family.

It is found in the cytoplasm. Its pathway is amino-acid biosynthesis; L-arginine biosynthesis [regulation]. Functionally, regulates arginine biosynthesis genes. This Lachnoclostridium phytofermentans (strain ATCC 700394 / DSM 18823 / ISDg) (Clostridium phytofermentans) protein is Arginine repressor.